A 569-amino-acid chain; its full sequence is Glutamine--tRNA ligase (569 aa).

Residues 1-23 (MSKDPMSKPTPEPAAHSKAGPAV) are disordered. Residues 50-60 (PEPNGYLHIGH) carry the 'HIGH' region motif. ATP-binding positions include 51 to 53 (EPN) and 57 to 63 (HIGHAKS). The L-glutamine site is built by Asp-83 and Tyr-228. ATP is bound by residues Thr-247 and 277–278 (RL). The short motif at 284–288 (ITSKR) is the 'KMSKS' region element.

This sequence belongs to the class-I aminoacyl-tRNA synthetase family. In terms of assembly, monomer.

The protein resides in the cytoplasm. It catalyses the reaction tRNA(Gln) + L-glutamine + ATP = L-glutaminyl-tRNA(Gln) + AMP + diphosphate. This chain is Glutamine--tRNA ligase, found in Pseudomonas syringae pv. tomato (strain ATCC BAA-871 / DC3000).